Here is a 477-residue protein sequence, read N- to C-terminus: Argininosuccinate synthase (477 aa).

ATP contacts are provided by residues Ala-17–Ser-25 and Ala-43. L-citrulline is bound at residue Tyr-99. Residues Gly-129 and Thr-131 each contribute to the ATP site. Residues Thr-131, Asn-135, and Asp-136 each coordinate L-aspartate. Asn-135 is a binding site for L-citrulline. Asp-136 lines the ATP pocket. Positions 139 and 192 each coordinate L-citrulline. Asp-194 provides a ligand contact to ATP. The L-citrulline site is built by Thr-201, Glu-203, and Glu-280. The disordered stretch occupies residues Asp-450–Asp-477. Residues Asp-468–Asp-477 are compositionally biased toward low complexity.

This sequence belongs to the argininosuccinate synthase family. Type 2 subfamily. Homotetramer.

The protein resides in the cytoplasm. The catalysed reaction is L-citrulline + L-aspartate + ATP = 2-(N(omega)-L-arginino)succinate + AMP + diphosphate + H(+). It participates in amino-acid biosynthesis; L-arginine biosynthesis; L-arginine from L-ornithine and carbamoyl phosphate: step 2/3. This is Argininosuccinate synthase from Nocardioides sp. (strain ATCC BAA-499 / JS614).